We begin with the raw amino-acid sequence, 131 residues long: UPF0292 protein PF1724 (131 aa).

One can recognise a Toprim domain in the interval Lys20–Ala103. Residues Glu26, Asp69, and Asp71 each contribute to the Mg(2+) site.

This sequence belongs to the UPF0292 family. The cofactor is Mg(2+).

This Pyrococcus furiosus (strain ATCC 43587 / DSM 3638 / JCM 8422 / Vc1) protein is UPF0292 protein PF1724.